A 429-amino-acid polypeptide reads, in one-letter code: Chaperone SurA (429 aa).

The N-terminal stretch at 1 to 18 (MFKRIALVCALFSGICFA) is a signal peptide. PpiC domains are found at residues 170-271 (NLTY…KLVA) and 281-380 (ITQT…EVIA).

Its subcellular location is the periplasm. The enzyme catalyses [protein]-peptidylproline (omega=180) = [protein]-peptidylproline (omega=0). In terms of biological role, chaperone involved in the correct folding and assembly of outer membrane proteins. Recognizes specific patterns of aromatic residues and the orientation of their side chains, which are found more frequently in integral outer membrane proteins. May act in both early periplasmic and late outer membrane-associated steps of protein maturation. The sequence is that of Chaperone SurA from Legionella pneumophila (strain Paris).